The following is a 518-amino-acid chain: Protein nucleotidyltransferase YdiU (518 aa).

The tract at residues 1 to 22 is disordered; the sequence is MTHLQFDNRLRAELPGDPEEGP. Positions 100, 102, 103, 123, 135, 136, 193, and 200 each coordinate ATP. D270 (proton acceptor) is an active-site residue. Residues N271 and D280 each contribute to the Mg(2+) site. D280 serves as a coordination point for ATP.

The protein belongs to the SELO family. Mg(2+) serves as cofactor. Mn(2+) is required as a cofactor.

The catalysed reaction is L-seryl-[protein] + ATP = 3-O-(5'-adenylyl)-L-seryl-[protein] + diphosphate. It catalyses the reaction L-threonyl-[protein] + ATP = 3-O-(5'-adenylyl)-L-threonyl-[protein] + diphosphate. It carries out the reaction L-tyrosyl-[protein] + ATP = O-(5'-adenylyl)-L-tyrosyl-[protein] + diphosphate. The enzyme catalyses L-histidyl-[protein] + UTP = N(tele)-(5'-uridylyl)-L-histidyl-[protein] + diphosphate. The catalysed reaction is L-seryl-[protein] + UTP = O-(5'-uridylyl)-L-seryl-[protein] + diphosphate. It catalyses the reaction L-tyrosyl-[protein] + UTP = O-(5'-uridylyl)-L-tyrosyl-[protein] + diphosphate. Its function is as follows. Nucleotidyltransferase involved in the post-translational modification of proteins. It can catalyze the addition of adenosine monophosphate (AMP) or uridine monophosphate (UMP) to a protein, resulting in modifications known as AMPylation and UMPylation. This Xanthomonas campestris pv. campestris (strain 8004) protein is Protein nucleotidyltransferase YdiU.